Consider the following 514-residue polypeptide: 2,3-bisphosphoglycerate-independent phosphoglycerate mutase (514 aa).

Residues Asp-14 and Ser-64 each coordinate Mn(2+). Ser-64 serves as the catalytic Phosphoserine intermediate. Substrate-binding positions include His-125, 155–156 (RD), Arg-187, Arg-193, 263–266 (RADR), and Lys-336. Residues Asp-403, His-407, Asp-444, His-445, and His-463 each contribute to the Mn(2+) site.

This sequence belongs to the BPG-independent phosphoglycerate mutase family. In terms of assembly, monomer. Mn(2+) serves as cofactor.

It catalyses the reaction (2R)-2-phosphoglycerate = (2R)-3-phosphoglycerate. Its pathway is carbohydrate degradation; glycolysis; pyruvate from D-glyceraldehyde 3-phosphate: step 3/5. Functionally, catalyzes the interconversion of 2-phosphoglycerate and 3-phosphoglycerate. This chain is 2,3-bisphosphoglycerate-independent phosphoglycerate mutase, found in Shewanella baltica (strain OS185).